The chain runs to 115 residues: UPF0102 protein NGO_1987 (115 aa).

The protein belongs to the UPF0102 family.

In Neisseria gonorrhoeae (strain ATCC 700825 / FA 1090), this protein is UPF0102 protein NGO_1987.